A 609-amino-acid chain; its full sequence is WD repeat-containing protein 1 (609 aa).

WD repeat units lie at residues 6 to 47 (EIKK…IRNI), 50 to 89 (PAIADIYTEHAHQVVVAKYAPSGFYIASGDVSGKLRIWDT), 95 to 137 (LLKY…LWDS), 140 to 178 (SVGEITGHNKVINSVDIKQTRPYRLATGSDDNCAAFFEG), 182 to 220 (KFKFTLSDHTRFVNCVRFSPDGNRFATASADGQIFIYDG), 226 to 265 (VCALGGGKAHDGGIYAISWSPDSSQLLSASGDKTAKIWDV), 272 to 308 (STFNMGSNVLDQQLGCLWQKDHLLSLSLSGYINYLDK), 313 to 353 (KPLR…YWDS), 360 to 410 (GFSG…KMDV), 434 to 476 (MKDK…LYSI), 482 to 520 (KSDDKTLEAKGPVTDLAYSHDGAFLAVCDANKVVTVFSV), 525 to 563 (VEHNVFYGHHAKVVCIAWSPDNEHFASGGMDMMVYVWTV), and 568 to 606 (TRIKIPDAHRLHHVSGLAWLDEHTLVTTSHDASVKEWSI).

It belongs to the WD repeat AIP1 family.

It localises to the cytoplasm. It is found in the cytoskeleton. In terms of biological role, induces disassembly of actin filaments in conjunction with ADF/cofilin family proteins. Enhances cofilin-mediated actin severing. The chain is WD repeat-containing protein 1 (WDR1) from Gallus gallus (Chicken).